Reading from the N-terminus, the 202-residue chain is Superoxide dismutase [Mn] (202 aa).

His27, His82, Asp164, and His168 together coordinate Mn(2+).

It belongs to the iron/manganese superoxide dismutase family. In terms of assembly, homodimer. Requires Mn(2+) as cofactor.

The enzyme catalyses 2 superoxide + 2 H(+) = H2O2 + O2. In terms of biological role, destroys superoxide anion radicals which are normally produced within the cells and which are toxic to biological systems. This Listeria monocytogenes serovar 1/2a (strain ATCC BAA-679 / EGD-e) protein is Superoxide dismutase [Mn] (sodA).